We begin with the raw amino-acid sequence, 426 residues long: MDTPLRRSRRLEGLKPLSPENLPVPEVSRAKRALVDFKSNSEETGELKSTRVPPLSLPSPGPQPETSPGSPCPPLSLPSPGPQPETSPGSPCPPLSLPSPGPQPETSPGSPCPPLSLPSPGPQPETSPGSPCPPLSLPSPGPQPEASPGSPGPRQDADDGSPQRQPEPHPGSLQPHQDLGLESPAGQTESSPESPQREQPSKLPPPQGELDSEAAHAKEEVIPGSPEPCPGQQAPGPEPSQPAQELTVQAPSSPERQLEPGKLPPAGETVTESLNLKKRVIASPQAPASKKLKEKEELPVIPKGKPKSGRVWKDRSKKRFSQMVQDKPLRTSWQRKMKERQERKLAKDFARHLEEEKQRRRQEKKERRAENLRRRLENERKAEIVQVIRNPAKLKKAKKKQLRSIEKRDTLALLQKQPPQRPVAKV.

Positions 1-426 (MDTPLRRSRR…QPPQRPVAKV (426 aa)) are disordered. Residue Ser-18 is modified to Phosphoserine. Basic and acidic residues predominate over residues 33–49 (ALVDFKSNSEETGELKS). The segment covering 55 to 145 (LSLPSPGPQP…SLPSPGPQPE (91 aa)) has biased composition (pro residues). Phosphoserine is present on Ser-59. The residue at position 66 (Thr-66) is a Phosphothreonine. Phosphoserine occurs at positions 67, 70, 161, 172, 183, 191, 194, 225, 252, 253, and 283. Positions 241-255 (QPAQELTVQAPSSPE) are enriched in polar residues. Over residues 304 to 320 (GKPKSGRVWKDRSKKRF) the composition is skewed to basic residues. A compositionally biased stretch (basic and acidic residues) spans 339–383 (ERQERKLAKDFARHLEEEKQRRRQEKKERRAENLRRRLENERKAE). Residues 346–389 (AKDFARHLEEEKQRRRQEKKERRAENLRRRLENERKAEIVQVIR) adopt a coiled-coil conformation. Residues 392–402 (AKLKKAKKKQL) show a composition bias toward basic residues. At Arg-408 the chain carries Citrulline.

Post-translationally, citrullinated by PADI4. Highly expressed in testis. Also expressed in heart, liver, kidney.

It is found in the nucleus. Its subcellular location is the chromosome. It localises to the nucleolus. In terms of biological role, required for proper chromosome segregation during mitosis and error-free mitotic progression. The polypeptide is Coiled-coil domain-containing protein 86 (Mus musculus (Mouse)).